The sequence spans 396 residues: Putative 2-hydroxyacid dehydrogenase YPL113C (396 aa).

NAD(+) is bound by residues 227–228 (SI), 311–313 (VGR), and aspartate 337. Arginine 313 is an active-site residue. Glutamate 342 is a catalytic residue. Histidine 361 (proton donor) is an active-site residue. Residue 361–364 (HIGS) coordinates NAD(+).

This sequence belongs to the D-isomer specific 2-hydroxyacid dehydrogenase family.

In terms of biological role, putative 2-hydroxyacid dehydrogenase. This is Putative 2-hydroxyacid dehydrogenase YPL113C from Saccharomyces cerevisiae (strain ATCC 204508 / S288c) (Baker's yeast).